The sequence spans 488 residues: Cysteine desulfurase, mitochondrial (488 aa).

Residues 25 to 52 (LPKPLATSSSPATNAPNKTSNPKTGELH) are disordered. Positions 30 to 47 (ATSSSPATNAPNKTSNPK) are enriched in polar residues. Pyridoxal 5'-phosphate is bound by residues 157–158 (AT), Asn-237, Gln-265, and 285–287 (SSH). Lys-288 bears the N6-(pyridoxal phosphate)lysine mark. Position 325 (Thr-325) interacts with pyridoxal 5'-phosphate. Cys-412 serves as the catalytic Cysteine persulfide intermediate. Residue Cys-412 coordinates [2Fe-2S] cluster.

This sequence belongs to the class-V pyridoxal-phosphate-dependent aminotransferase family. NifS/IscS subfamily. The cofactor is pyridoxal 5'-phosphate.

The protein localises to the mitochondrion. It catalyses the reaction (sulfur carrier)-H + L-cysteine = (sulfur carrier)-SH + L-alanine. Its function is as follows. Catalyzes the removal of elemental sulfur from cysteine to produce alanine. It supplies the inorganic sulfur for iron-sulfur (Fe-S) clusters. Plays a role in both tRNA-processing and mitochondrial metabolism. Involved in the 2-thio-modification of both 5-carboxymethylaminomethyl-2-thiouridine in mitochondrial tRNAs and 5-methoxycarbonylmethyl-2-thiouridine (mcm5s2U) in cytoplasmic tRNAs. This is Cysteine desulfurase, mitochondrial (NFS1) from Candida albicans (strain SC5314 / ATCC MYA-2876) (Yeast).